We begin with the raw amino-acid sequence, 221 residues long: N-(5'-phosphoribosyl)anthranilate isomerase (221 aa).

This sequence belongs to the TrpF family.

It catalyses the reaction N-(5-phospho-beta-D-ribosyl)anthranilate = 1-(2-carboxyphenylamino)-1-deoxy-D-ribulose 5-phosphate. It functions in the pathway amino-acid biosynthesis; L-tryptophan biosynthesis; L-tryptophan from chorismate: step 3/5. The protein is N-(5'-phosphoribosyl)anthranilate isomerase of Parabacteroides distasonis (strain ATCC 8503 / DSM 20701 / CIP 104284 / JCM 5825 / NCTC 11152).